Reading from the N-terminus, the 20-residue chain is Dihydroorotase-like protein (20 aa).

The protein belongs to the metallo-dependent hydrolases superfamily. DHOase family. PyrC' subfamily. In terms of assembly, heterododecamer of 6 active PyrB subunits and 6 non-catalytic PyrC' subunits.

Functionally, non-functional DHOase. In Pseudomonas fluorescens biotype A, this protein is Dihydroorotase-like protein (pyrC').